A 280-amino-acid chain; its full sequence is MNNSIKLKRRLTQSLTYLYLIGLSIVIIYPLLITIMSAFKAGNVSAFKLDTNIDLNFDNFKGLFTETLYGTWYLNTLIIALITMAVQTSIIVLAGYAYSRYNFLARKQSLVFFLIIQMVPTMAALTAFFVMALMLNALNHNWFLIFLYVGGGIPMNAWLMKGYFDTVPMSLDESAKLDGAGHFRRFWQIVLPLVRPMVAVQALWAFMGPFGDYILSSFLLREKEYFTVAVGLQTFVNNAKNLKIAYFSAGAILIALPICILFFFLQKNFVSGLTSGGDKG.

6 helical membrane passes run 15-35 (LTYL…LITI), 77-97 (LIIA…AGYA), 110-130 (LVFF…AFFV), 142-162 (WFLI…LMKG), 200-220 (VQAL…SFLL), and 244-264 (IAYF…LFFF). The ABC transmembrane type-1 domain maps to 73–265 (YLNTLIIALI…LPICILFFFL (193 aa)).

This sequence belongs to the binding-protein-dependent transport system permease family. MalFG subfamily.

It localises to the cell membrane. Its function is as follows. Part of the binding-protein-dependent transport system for maltodextrin; probably responsible for the translocation of the substrate across the membrane. The protein is Maltodextrin transport system permease protein MalD (malD) of Streptococcus pneumoniae (strain ATCC BAA-255 / R6).